Here is a 157-residue protein sequence, read N- to C-terminus: Small ribosomal subunit protein uS7 (157 aa).

It belongs to the universal ribosomal protein uS7 family. As to quaternary structure, part of the 30S ribosomal subunit. Contacts proteins S9 and S11.

One of the primary rRNA binding proteins, it binds directly to 16S rRNA where it nucleates assembly of the head domain of the 30S subunit. Is located at the subunit interface close to the decoding center, probably blocks exit of the E-site tRNA. This is Small ribosomal subunit protein uS7 from Borrelia turicatae (strain 91E135).